A 108-amino-acid chain; its full sequence is UPF0060 membrane protein SAB2216c (108 aa).

The next 4 membrane-spanning stretches (helical) occupy residues 5–25 (IFIF…IWLW), 31–51 (CSLV…IATF), 60–80 (VYAA…MVVD), and 86–106 (KYDV…LLPS).

Belongs to the UPF0060 family.

It is found in the cell membrane. This is UPF0060 membrane protein SAB2216c from Staphylococcus aureus (strain bovine RF122 / ET3-1).